The primary structure comprises 331 residues: ADP-L-glycero-D-manno-heptose-6-epimerase (331 aa).

NADP(+) contacts are provided by residues 11 to 12 (FI), 32 to 33 (DN), Lys39, Lys54, 75 to 79 (EGACS), and Asn92. The active-site Proton acceptor is Tyr139. Lys143 is an NADP(+) binding site. Substrate is bound at residue Asn168. 2 residues coordinate NADP(+): Val169 and Lys177. Catalysis depends on Lys177, which acts as the Proton acceptor. Residues Arg179, His186, 200–203 (FGEY), Arg213, and Tyr292 each bind substrate.

Belongs to the NAD(P)-dependent epimerase/dehydratase family. HldD subfamily. Homopentamer. Requires NADP(+) as cofactor.

The catalysed reaction is ADP-D-glycero-beta-D-manno-heptose = ADP-L-glycero-beta-D-manno-heptose. It functions in the pathway nucleotide-sugar biosynthesis; ADP-L-glycero-beta-D-manno-heptose biosynthesis; ADP-L-glycero-beta-D-manno-heptose from D-glycero-beta-D-manno-heptose 7-phosphate: step 4/4. Its function is as follows. Catalyzes the interconversion between ADP-D-glycero-beta-D-manno-heptose and ADP-L-glycero-beta-D-manno-heptose via an epimerization at carbon 6 of the heptose. The polypeptide is ADP-L-glycero-D-manno-heptose-6-epimerase (Ralstonia nicotianae (strain ATCC BAA-1114 / GMI1000) (Ralstonia solanacearum)).